The sequence spans 422 residues: uncharacterized protein (422 aa).

Disordered stretches follow at residues 1-21 (MRDN…TTYD), 158-218 (TAKS…TEQV), and 246-271 (DFGT…PWLT). Over residues 11 to 21 (AGSNTQQTTYD) the composition is skewed to polar residues. Positions 170–199 (SKSSNGSSSTSTTQRGGSSNENKVKALQVA) are enriched in low complexity. Polar residues-rich tracts occupy residues 205-216 (GSQGNSGDQGTE) and 250-261 (APSSSGSGTQDG). The segment covering 262-271 (TPTPWTPWLT) has biased composition (low complexity).

It belongs to the adhesin P1 family.

This is an uncharacterized protein from Mycoplasma pneumoniae (strain ATCC 29342 / M129 / Subtype 1) (Mycoplasmoides pneumoniae).